Consider the following 239-residue polypeptide: ATP-dependent dethiobiotin synthetase BioD (239 aa).

15–20 (EIGKTF) provides a ligand contact to ATP. Thr19 is a binding site for Mg(2+). Lys40 is a catalytic residue. Residues Asp57, 118–121 (EGVG), and 178–179 (NH) contribute to the ATP site. Mg(2+)-binding residues include Asp57 and Glu118.

Belongs to the dethiobiotin synthetase family. Homodimer. Mg(2+) serves as cofactor.

Its subcellular location is the cytoplasm. It carries out the reaction (7R,8S)-7,8-diammoniononanoate + CO2 + ATP = (4R,5S)-dethiobiotin + ADP + phosphate + 3 H(+). Its pathway is cofactor biosynthesis; biotin biosynthesis; biotin from 7,8-diaminononanoate: step 1/2. In terms of biological role, catalyzes a mechanistically unusual reaction, the ATP-dependent insertion of CO2 between the N7 and N8 nitrogen atoms of 7,8-diaminopelargonic acid (DAPA, also called 7,8-diammoniononanoate) to form a ureido ring. The chain is ATP-dependent dethiobiotin synthetase BioD from Burkholderia cenocepacia (strain HI2424).